A 216-amino-acid polypeptide reads, in one-letter code: tRNA (guanine-N(7)-)-methyltransferase (216 aa).

Positions 43, 68, 95, and 117 each coordinate S-adenosyl-L-methionine. Substrate-binding positions include aspartate 153 and 190–193 (TEYE).

The protein belongs to the class I-like SAM-binding methyltransferase superfamily. TrmB family.

The catalysed reaction is guanosine(46) in tRNA + S-adenosyl-L-methionine = N(7)-methylguanosine(46) in tRNA + S-adenosyl-L-homocysteine. Its pathway is tRNA modification; N(7)-methylguanine-tRNA biosynthesis. Its function is as follows. Catalyzes the formation of N(7)-methylguanine at position 46 (m7G46) in tRNA. This chain is tRNA (guanine-N(7)-)-methyltransferase, found in Desulfitobacterium hafniense (strain Y51).